A 149-amino-acid polypeptide reads, in one-letter code: L-alanine exporter AlaE (149 aa).

Transmembrane regions (helical) follow at residues F16–M36, L46–I66, V85–A105, and A112–L132.

Belongs to the AlaE exporter family.

Its subcellular location is the cell inner membrane. Its function is as follows. Exports L-alanine. The polypeptide is L-alanine exporter AlaE (Salmonella arizonae (strain ATCC BAA-731 / CDC346-86 / RSK2980)).